A 337-amino-acid chain; its full sequence is Holliday junction branch migration complex subunit RuvB (337 aa).

The large ATPase domain (RuvB-L) stretch occupies residues 4–185 (ADRLISNSFE…FGITQRLEYY (182 aa)). Residues Ile-24, Arg-25, Gly-66, Lys-69, Thr-70, Thr-71, 132–134 (EDY), Arg-175, Tyr-185, and Arg-222 each bind ATP. Thr-70 is a Mg(2+) binding site. Positions 186–256 (KVDDLKDIVQ…TAKKALDMLD (71 aa)) are small ATPAse domain (RuvB-S). Residues 259-337 (SSGFDYMDRK…HFGLDIPEAR (79 aa)) are head domain (RuvB-H). Arg-314 and Arg-319 together coordinate DNA.

This sequence belongs to the RuvB family. As to quaternary structure, homohexamer. Forms an RuvA(8)-RuvB(12)-Holliday junction (HJ) complex. HJ DNA is sandwiched between 2 RuvA tetramers; dsDNA enters through RuvA and exits via RuvB. An RuvB hexamer assembles on each DNA strand where it exits the tetramer. Each RuvB hexamer is contacted by two RuvA subunits (via domain III) on 2 adjacent RuvB subunits; this complex drives branch migration. In the full resolvosome a probable DNA-RuvA(4)-RuvB(12)-RuvC(2) complex forms which resolves the HJ.

It localises to the cytoplasm. It catalyses the reaction ATP + H2O = ADP + phosphate + H(+). In terms of biological role, the RuvA-RuvB-RuvC complex processes Holliday junction (HJ) DNA during genetic recombination and DNA repair, while the RuvA-RuvB complex plays an important role in the rescue of blocked DNA replication forks via replication fork reversal (RFR). RuvA specifically binds to HJ cruciform DNA, conferring on it an open structure. The RuvB hexamer acts as an ATP-dependent pump, pulling dsDNA into and through the RuvAB complex. RuvB forms 2 homohexamers on either side of HJ DNA bound by 1 or 2 RuvA tetramers; 4 subunits per hexamer contact DNA at a time. Coordinated motions by a converter formed by DNA-disengaged RuvB subunits stimulates ATP hydrolysis and nucleotide exchange. Immobilization of the converter enables RuvB to convert the ATP-contained energy into a lever motion, pulling 2 nucleotides of DNA out of the RuvA tetramer per ATP hydrolyzed, thus driving DNA branch migration. The RuvB motors rotate together with the DNA substrate, which together with the progressing nucleotide cycle form the mechanistic basis for DNA recombination by continuous HJ branch migration. Branch migration allows RuvC to scan DNA until it finds its consensus sequence, where it cleaves and resolves cruciform DNA. This Photobacterium profundum (strain SS9) protein is Holliday junction branch migration complex subunit RuvB.